The chain runs to 362 residues: E3 ubiquitin-protein ligase TM129 (362 aa).

Residues 1 to 6 (MDSPEV) lie on the Lumenal side of the membrane. The helical transmembrane segment at 7-27 (TFTLAYLVFAVCFVFTPNEFY) threads the bilayer. Residues 28–56 (SAGLTVQNLLSGWLGSEDAAFVPYHLRRT) are Cytoplasmic-facing. Residues 57–77 (SATLLCHSLLPLGYYMGMCFA) traverse the membrane as a helical segment. The Lumenal segment spans residues 78–94 (ASEKQLYSPGQAPEAWQ). The helical transmembrane segment at 95–115 (LFLLLAVTLPLLSCTLIYYWS) threads the bilayer. Residues 116–362 (WDRWTRHPLA…FCILDVCCVR (247 aa)) lie on the Cytoplasmic side of the membrane. The RING-type; degenerate zinc finger occupies 285–350 (CIGCMQTRAS…ASRVPCPTCR (66 aa)).

It belongs to the TMEM129 family. In terms of assembly, integral component of ER-resident dislocation complexes.

The protein resides in the endoplasmic reticulum membrane. It carries out the reaction S-ubiquitinyl-[E2 ubiquitin-conjugating enzyme]-L-cysteine + [acceptor protein]-L-lysine = [E2 ubiquitin-conjugating enzyme]-L-cysteine + N(6)-ubiquitinyl-[acceptor protein]-L-lysine.. Its pathway is protein modification; protein ubiquitination. E3 ubiquitin-protein ligase involved in ER-associated protein degradation, preferentially associates with the E2 enzyme UBE2J2. Exploited by viral US11 proteins to mediate HLA class I proteins degradation. The protein is E3 ubiquitin-protein ligase TM129 (Tmem129) of Mus musculus (Mouse).